The chain runs to 253 residues: Sulfate transporter CysZ (253 aa).

Transmembrane regions (helical) follow at residues 31–51 (FVILPLLVNILLMGGAFWWLF), 75–95 (LLWPLAVISVLLVFGYFFSTI), 151–171 (IVLLILYFIPGIGQTVAPVLW), and 222–242 (IPLLNLFIMPVAVCGATAMWV).

Belongs to the CysZ family.

Its subcellular location is the cell inner membrane. In terms of biological role, high affinity, high specificity proton-dependent sulfate transporter, which mediates sulfate uptake. Provides the sulfur source for the cysteine synthesis pathway. This Escherichia coli O81 (strain ED1a) protein is Sulfate transporter CysZ.